The primary structure comprises 296 residues: Nucleotide-binding protein ABC3036 (296 aa).

An ATP-binding site is contributed by 13-20 (GMSGAGKS). 64-67 (DLRG) is a GTP binding site.

This sequence belongs to the RapZ-like family.

Displays ATPase and GTPase activities. The polypeptide is Nucleotide-binding protein ABC3036 (Shouchella clausii (strain KSM-K16) (Alkalihalobacillus clausii)).